The primary structure comprises 360 residues: SPRY domain-containing SOCS box protein 3 (360 aa).

Residues 20-55 are disordered; it reads RDQDARSPTLPAEEEAWGYDSDGQHSNSDSDTDLLH. One can recognise a B30.2/SPRY domain in the interval 85-274; the sequence is LHTFHQIKSC…MKVIRSCCCR (190 aa). Residues 264-315 form the SOCS box domain; the sequence is SMKVIRSCCCRTSLQYLCCARLRQLLPDSVDSLEVLPLPPGLKQVLGNKLGW. Residues 323–350 are disordered; sequence RSNQHKGDTSATTSCGSDSDSSCTPGQD. A compositionally biased stretch (low complexity) spans 331–346; sequence TSATTSCGSDSDSSCT.

This sequence belongs to the SPSB family. In terms of assembly, substrate-recognition component of the ECS(SPSB3) complex, composed of spsb3, cul5, elob, elob and rnf7/rbx2.

The protein localises to the nucleus. The protein operates within protein modification; protein ubiquitination. In terms of biological role, substrate-recognition component of a cullin-5-RING E3 ubiquitin-protein ligase complex (ECS complex, also named CRL5 complex), which mediates the ubiquitination and subsequent proteasomal degradation of target proteins. This is SPRY domain-containing SOCS box protein 3 (spsb3) from Xenopus tropicalis (Western clawed frog).